The following is a 474-amino-acid chain: Aspartyl/glutamyl-tRNA(Asn/Gln) amidotransferase subunit B (474 aa).

Belongs to the GatB/GatE family. GatB subfamily. In terms of assembly, heterotrimer of A, B and C subunits.

It catalyses the reaction L-glutamyl-tRNA(Gln) + L-glutamine + ATP + H2O = L-glutaminyl-tRNA(Gln) + L-glutamate + ADP + phosphate + H(+). It carries out the reaction L-aspartyl-tRNA(Asn) + L-glutamine + ATP + H2O = L-asparaginyl-tRNA(Asn) + L-glutamate + ADP + phosphate + 2 H(+). Its function is as follows. Allows the formation of correctly charged Asn-tRNA(Asn) or Gln-tRNA(Gln) through the transamidation of misacylated Asp-tRNA(Asn) or Glu-tRNA(Gln) in organisms which lack either or both of asparaginyl-tRNA or glutaminyl-tRNA synthetases. The reaction takes place in the presence of glutamine and ATP through an activated phospho-Asp-tRNA(Asn) or phospho-Glu-tRNA(Gln). This chain is Aspartyl/glutamyl-tRNA(Asn/Gln) amidotransferase subunit B, found in Limosilactobacillus reuteri (strain DSM 20016) (Lactobacillus reuteri).